A 553-amino-acid chain; its full sequence is Solute carrier family 22 member 12 (553 aa).

The helical transmembrane segment at 9-29 (LVGGLGRFQVLQTMALMVSIM) threads the bilayer. N-linked (GlcNAc...) asparagine glycosylation is found at N56 and N102. 11 helical membrane passes run 146-166 (PMAQ…CGPA), 174-194 (LVLT…AFAP), 195-215 (AFPV…GVMM), 232-252 (LVMT…AAVA), 260-280 (LLQL…WWLA), 351-371 (CIST…ALDL), 378-398 (IFLL…GALL), 407-427 (PTLA…TLVP), 435-455 (SALA…ITIY), 466-486 (MTAV…GPLV), and 495-515 (WLPL…ALLL). The residue at position 542 (T542) is a Phosphothreonine.

Belongs to the major facilitator (TC 2.A.1) superfamily. Organic cation transporter (TC 2.A.1.19) family. Interacts with PDZK1. In terms of processing, N-glycosylated. In terms of tissue distribution, detected in kidney (at protein level). Detected in fetal and adult kidney. Detected in epithelial cells of proximal tubules in renal cortex.

The protein resides in the apical cell membrane. It carries out the reaction urate(out) + (S)-lactate(in) = urate(in) + (S)-lactate(out). The enzyme catalyses nicotinate(in) + urate(out) = nicotinate(out) + urate(in). It catalyses the reaction urate(out) + n chloride(in) = urate(in) + n chloride(out). The catalysed reaction is orotate(out) + nicotinate(in) = orotate(in) + nicotinate(out). Electroneutral antiporter that translocates urate across the apical membrane of proximal tubular cells in exchange for monovalent organic or inorganic anions. Involved in renal reabsorption of urate and helps maintaining blood levels of uric acid. Mediates urate uptake by an exchange with organic anions such as (S)-lactate and nicotinate, and inorganic anion Cl(-). Other inorganic anions such as Br(-), I(-) and NO3(-) may also act as counteranions that exchange for urate. Also mediates orotate tubular uptake coupled with nicotinate efflux and to a lesser extent with lactate efflux, therefore displaying a potential role in orotate renal reabsorption. Orotate transport is Cl(-)-dependent. This chain is Solute carrier family 22 member 12, found in Homo sapiens (Human).